Here is a 270-residue protein sequence, read N- to C-terminus: Type II restriction enzyme CeqI (270 aa).

It catalyses the reaction Endonucleolytic cleavage of DNA to give specific double-stranded fragments with terminal 5'-phosphates.. In terms of biological role, a P subtype restriction enzyme that recognizes the double-stranded sequence 5'-GATATC-3' and cleaves after T-3. The protein is Type II restriction enzyme CeqI (ceqIR) of Rhodococcus hoagii (Corynebacterium equii).